The chain runs to 346 residues: Retinal homeobox protein Rx (346 aa).

The Octapeptide motif motif lies at 33-40; sequence HSIEAILG. Disordered regions lie at residues 46–145 and 194–318; these read GILG…TFTT and QEKL…LDEA. Over residues 55–67 the composition is skewed to basic and acidic residues; it reads RGARGAKERDRRL. The span at 83–92 shows a compositional bias: pro residues; sequence PSPPPAPAPA. Residues 136–195 constitute a DNA-binding region (homeobox); sequence HRRNRTTFTTYQLHELERAFEKSHYPDVYSREELAGKVNLPEVRVQVWFQNRRAKWRRQE. The segment covering 207–225 has biased composition (low complexity); the sequence is SPLLSFSRSPPSATLSPLG. Gly residues predominate over residues 226 to 236; that stretch reads AGPGSGGGPAG. Positions 237–246 are enriched in low complexity; it reads GALPLESWLG. Pro residues predominate over residues 274 to 304; the sequence is YTPPPPPPPFLNSPPLGPGLQPLAPPPPSYP. The short motif at 323–336 is the OAR element; it reads SSIAALRLKAKEHI. The Nuclear localization signal signature appears at 329–333; that stretch reads RLKAK.

This sequence belongs to the paired homeobox family. Bicoid subfamily. In terms of tissue distribution, expressed in the developing eye and weakly expressed in the adult retina.

The protein localises to the nucleus. Functionally, plays a critical role in eye formation by regulating the initial specification of retinal cells and/or their subsequent proliferation. Binds to the photoreceptor conserved element-I (PCE-1/Ret 1) in the photoreceptor cell-specific arrestin promoter. This is Retinal homeobox protein Rx (RAX) from Homo sapiens (Human).